The sequence spans 550 residues: Cochlin (550 aa).

Residues 1-24 (MSAAWIPALGLGVCLLLLPGPAGS) form the signal peptide. The LCCL domain maps to 28–121 (APIAITCFTR…QMLSRWSASF (94 aa)). 2 disulfides stabilise this stretch: Cys-34–Cys-50 and Cys-54–Cys-74. Asn-100 carries N-linked (GlcNAc...) asparagine glycosylation. Residues 128–139 (SSTQEATGQAVS) show a composition bias toward polar residues. Positions 128–159 (SSTQEATGQAVSTAHPPTGKRLKKTPEKKTGN) are disordered. 2 VWFA domains span residues 165-346 (DIAF…VKPL) and 367-537 (NIAF…VSDV). Asn-221 is a glycosylation site (N-linked (GlcNAc...) asparagine).

As to quaternary structure, monomer. May form homodimer. Interacts with type II collagen. Interacts with SLC44A2. Interacts with ANXA2. Post-translationally, N-glycosylated. A 50 kDa form is created by proteolytic cleavage. As to expression, expressed in inner ear structures; the cochlea and the vestibule.

Its subcellular location is the secreted. The protein localises to the extracellular space. It is found in the extracellular matrix. Plays a role in the control of cell shape and motility in the trabecular meshwork. This chain is Cochlin (COCH), found in Homo sapiens (Human).